Here is a 428-residue protein sequence, read N- to C-terminus: Glutamate-1-semialdehyde 2,1-aminomutase (428 aa).

The residue at position 265 (Lys265) is an N6-(pyridoxal phosphate)lysine.

The protein belongs to the class-III pyridoxal-phosphate-dependent aminotransferase family. HemL subfamily. As to quaternary structure, homodimer. Requires pyridoxal 5'-phosphate as cofactor.

It localises to the cytoplasm. The catalysed reaction is (S)-4-amino-5-oxopentanoate = 5-aminolevulinate. The protein operates within porphyrin-containing compound metabolism; protoporphyrin-IX biosynthesis; 5-aminolevulinate from L-glutamyl-tRNA(Glu): step 2/2. The polypeptide is Glutamate-1-semialdehyde 2,1-aminomutase (Proteus mirabilis (strain HI4320)).